Consider the following 450-residue polypeptide: Sorting nexin-4 (450 aa).

Residue Met-1 is modified to N-acetylmethionine. The segment at 1-46 (MEQAPPDPERQLQPAPLEPLGSPDAGLGAAVGKEAEGAGEESSGVD) is disordered. Ser-22 carries the phosphoserine modification. Positions 61–187 (SVSEAEKRTG…YLFLTQEGNW (127 aa)) constitute a PX domain. 4 residues coordinate a 1,2-diacyl-sn-glycero-3-phospho-(1D-myo-inositol-3-phosphate): Arg-106, Ser-108, Lys-132, and Arg-154.

Belongs to the sorting nexin family. Heterodimer; heterodimerizes with SNX7 or SNX30. Interacts with WWC1/KIBRA. Identified in a complex with WWC1/KIBRA and dynein components DYNLL1 and DYNC1I2. Interacts with BIN1.

Its subcellular location is the early endosome membrane. Involved in the regulation of endocytosis and in several stages of intracellular trafficking. Plays a role in recycling endocytosed transferrin receptor and prevent its degradation. Involved in autophagosome assembly by regulating trafficking and recycling of phospholipid scramblase ATG9A. The chain is Sorting nexin-4 from Homo sapiens (Human).